The following is a 72-amino-acid chain: Crustacean hyperglycemic hormone (72 aa).

Disulfide bonds link C7–C43, C23–C39, and C26–C52. V72 is modified (valine amide).

It is found in the secreted. Its function is as follows. Hormone found in the sinus gland of isopods and decapods which controls the blood sugar level. Has a secretagogue action over the amylase released from the midgut gland. May act as a stress hormone and may be involved in the control of molting and reproduction. This Penaeus schmitti (White shrimp) protein is Crustacean hyperglycemic hormone.